Consider the following 82-residue polypeptide: Translation initiation factor IF-1, chloroplastic (82 aa).

The 72-residue stretch at 1–72 folds into the S1-like domain; that stretch reads MNKQNLIDVE…TKGRIIYRLR (72 aa).

Belongs to the IF-1 family. As to quaternary structure, component of the 30S ribosomal translation pre-initiation complex which assembles on the 30S ribosome in the order IF-2 and IF-3, IF-1 and N-formylmethionyl-tRNA(fMet); mRNA recruitment can occur at any time during PIC assembly.

Its subcellular location is the plastid. The protein localises to the chloroplast. Functionally, one of the essential components for the initiation of protein synthesis. Stabilizes the binding of IF-2 and IF-3 on the 30S subunit to which N-formylmethionyl-tRNA(fMet) subsequently binds. Helps modulate mRNA selection, yielding the 30S pre-initiation complex (PIC). Upon addition of the 50S ribosomal subunit IF-1, IF-2 and IF-3 are released leaving the mature 70S translation initiation complex. The chain is Translation initiation factor IF-1, chloroplastic from Cycas taitungensis (Prince sago).